We begin with the raw amino-acid sequence, 124 residues long: Small ribosomal subunit protein uS12 (124 aa).

At Asp89 the chain carries 3-methylthioaspartic acid.

It belongs to the universal ribosomal protein uS12 family. Part of the 30S ribosomal subunit. Contacts proteins S8 and S17. May interact with IF1 in the 30S initiation complex.

Functionally, with S4 and S5 plays an important role in translational accuracy. In terms of biological role, interacts with and stabilizes bases of the 16S rRNA that are involved in tRNA selection in the A site and with the mRNA backbone. Located at the interface of the 30S and 50S subunits, it traverses the body of the 30S subunit contacting proteins on the other side and probably holding the rRNA structure together. The combined cluster of proteins S8, S12 and S17 appears to hold together the shoulder and platform of the 30S subunit. In Shewanella baltica (strain OS223), this protein is Small ribosomal subunit protein uS12.